A 146-amino-acid chain; its full sequence is 3-dehydroquinate dehydratase (146 aa).

The active-site Proton acceptor is the tyrosine 22. Residues asparagine 74, histidine 80, and aspartate 87 each contribute to the substrate site. Histidine 100 acts as the Proton donor in catalysis. Substrate is bound by residues 101 to 102 (LS) and arginine 111.

This sequence belongs to the type-II 3-dehydroquinase family. In terms of assembly, homododecamer.

It catalyses the reaction 3-dehydroquinate = 3-dehydroshikimate + H2O. The protein operates within metabolic intermediate biosynthesis; chorismate biosynthesis; chorismate from D-erythrose 4-phosphate and phosphoenolpyruvate: step 3/7. Functionally, catalyzes a trans-dehydration via an enolate intermediate. In Clostridium perfringens (strain 13 / Type A), this protein is 3-dehydroquinate dehydratase.